A 231-amino-acid polypeptide reads, in one-letter code: Ribonuclease HII (231 aa).

One can recognise an RNase H type-2 domain in the interval 23 to 214; sequence GPVAGVDEAG…VAKAHREWAL (192 aa). A divalent metal cation-binding residues include D29, E30, and D123.

It belongs to the RNase HII family. The cofactor is Mn(2+). Requires Mg(2+) as cofactor.

It is found in the cytoplasm. The enzyme catalyses Endonucleolytic cleavage to 5'-phosphomonoester.. In terms of biological role, endonuclease that specifically degrades the RNA of RNA-DNA hybrids. This is Ribonuclease HII from Corynebacterium efficiens (strain DSM 44549 / YS-314 / AJ 12310 / JCM 11189 / NBRC 100395).